Here is a 258-residue protein sequence, read N- to C-terminus: Putative gamma-secretase subunit APH-1C (258 aa).

7 helical membrane-spanning segments follow: residues 5–25, 32–52, 71–91, 116–136, 161–181, 187–207, and 214–234; these read VFFGCAFIAFGPAFALYLFTI, VIFLIAGAFFWLVSLLLSSMF, LLIFGALLSVCIQELFRLAYY, LLAYVSGLGFGIMSGVFSFVN, AFMTLVVIMLHVFWGVVFFDG, WYTLLTVLLTHLVVSTQTFLS, and LVTAYIIMVLMGIWAFYVAGG.

This sequence belongs to the APH-1 family. As to quaternary structure, potential component of the gamma-secretase complex.

Its subcellular location is the membrane. Its function is as follows. Potential subunit of the gamma-secretase complex, an endoprotease complex that catalyzes the intramembrane cleavage of integral proteins such as Notch receptors and APP (amyloid-beta precursor protein). The chain is Putative gamma-secretase subunit APH-1C (Aph1c) from Mus musculus (Mouse).